We begin with the raw amino-acid sequence, 271 residues long: Small ribosomal subunit protein uS9m (271 aa).

A mitochondrion-targeting transit peptide spans 1-11 (MFRSLAKLRCF). The segment at 251–271 (KVERKKTGQPKARKKYTWVKR) is disordered. A compositionally biased stretch (basic residues) spans 252 to 271 (VERKKTGQPKARKKYTWVKR).

The protein belongs to the universal ribosomal protein uS9 family. As to quaternary structure, component of the mitochondrial small ribosomal subunit (mt-SSU). Mature yeast 74S mitochondrial ribosomes consist of a small (37S) and a large (54S) subunit. The 37S small subunit contains a 15S ribosomal RNA (15S mt-rRNA) and at least 32 different proteins. The 54S large subunit contains a 21S rRNA (21S mt-rRNA) and at least 45 different proteins.

Its subcellular location is the mitochondrion. In terms of biological role, component of the mitochondrial ribosome (mitoribosome), a dedicated translation machinery responsible for the synthesis of mitochondrial genome-encoded proteins, including at least some of the essential transmembrane subunits of the mitochondrial respiratory chain. The mitoribosomes are attached to the mitochondrial inner membrane and translation products are cotranslationally integrated into the membrane. The sequence is that of Small ribosomal subunit protein uS9m (mrps9) from Schizosaccharomyces pombe (strain 972 / ATCC 24843) (Fission yeast).